The sequence spans 608 residues: 1-deoxy-D-xylulose-5-phosphate synthase (608 aa).

Residues histidine 66 and 107 to 109 (GHA) each bind thiamine diphosphate. Mg(2+) is bound at residue aspartate 138. Thiamine diphosphate-binding positions include 139-140 (GA), asparagine 167, phenylalanine 277, and glutamate 350. Asparagine 167 contributes to the Mg(2+) binding site.

It belongs to the transketolase family. DXPS subfamily. Homodimer. Requires Mg(2+) as cofactor. It depends on thiamine diphosphate as a cofactor.

The catalysed reaction is D-glyceraldehyde 3-phosphate + pyruvate + H(+) = 1-deoxy-D-xylulose 5-phosphate + CO2. It participates in metabolic intermediate biosynthesis; 1-deoxy-D-xylulose 5-phosphate biosynthesis; 1-deoxy-D-xylulose 5-phosphate from D-glyceraldehyde 3-phosphate and pyruvate: step 1/1. Its function is as follows. Catalyzes the acyloin condensation reaction between C atoms 2 and 3 of pyruvate and glyceraldehyde 3-phosphate to yield 1-deoxy-D-xylulose-5-phosphate (DXP). This chain is 1-deoxy-D-xylulose-5-phosphate synthase, found in Thermotoga maritima (strain ATCC 43589 / DSM 3109 / JCM 10099 / NBRC 100826 / MSB8).